Here is a 166-residue protein sequence, read N- to C-terminus: Ribonuclease H (166 aa).

Positions 10–151 (KRVRVDMFTD…ADELARRGTS (142 aa)) constitute an RNase H type-1 domain. Positions 19, 57, 79, and 143 each coordinate Mg(2+). A compositionally biased stretch (basic and acidic residues) spans 145–157 (LARRGTSEARQGK). A disordered region spans residues 145–166 (LARRGTSEARQGKVDGQSSTIL).

Belongs to the RNase H family. In terms of assembly, monomer. Mg(2+) serves as cofactor.

It is found in the cytoplasm. The catalysed reaction is Endonucleolytic cleavage to 5'-phosphomonoester.. Functionally, endonuclease that specifically degrades the RNA of RNA-DNA hybrids. The polypeptide is Ribonuclease H (Rhodospirillum rubrum (strain ATCC 11170 / ATH 1.1.1 / DSM 467 / LMG 4362 / NCIMB 8255 / S1)).